A 179-amino-acid polypeptide reads, in one-letter code: Large ribosomal subunit protein uL5 (179 aa).

It belongs to the universal ribosomal protein uL5 family. As to quaternary structure, part of the 50S ribosomal subunit; part of the 5S rRNA/L5/L18/L25 subcomplex. Contacts the 5S rRNA and the P site tRNA. Forms a bridge to the 30S subunit in the 70S ribosome.

Functionally, this is one of the proteins that bind and probably mediate the attachment of the 5S RNA into the large ribosomal subunit, where it forms part of the central protuberance. In the 70S ribosome it contacts protein S13 of the 30S subunit (bridge B1b), connecting the 2 subunits; this bridge is implicated in subunit movement. Contacts the P site tRNA; the 5S rRNA and some of its associated proteins might help stabilize positioning of ribosome-bound tRNAs. This is Large ribosomal subunit protein uL5 from Bordetella petrii (strain ATCC BAA-461 / DSM 12804 / CCUG 43448).